The primary structure comprises 547 residues: Type I inositol polyphosphate 5-phosphatase 4 (547 aa).

Residues 56–67 show a composition bias toward basic and acidic residues; sequence CSVRKSKTETRS. The tract at residues 56 to 80 is disordered; sequence CSVRKSKTETRSKRNSGRARRNKLD. Catalytic stretches follow at residues 387-402 and 467-482; these read DRVI…IALS and KRRT…WHGS.

Belongs to the inositol polyphosphate 5-phosphatase family.

This Arabidopsis thaliana (Mouse-ear cress) protein is Type I inositol polyphosphate 5-phosphatase 4.